Here is a 101-residue protein sequence, read N- to C-terminus: Large ribosomal subunit protein uL24 (101 aa).

The protein belongs to the universal ribosomal protein uL24 family. In terms of assembly, part of the 50S ribosomal subunit.

Its function is as follows. One of two assembly initiator proteins, it binds directly to the 5'-end of the 23S rRNA, where it nucleates assembly of the 50S subunit. One of the proteins that surrounds the polypeptide exit tunnel on the outside of the subunit. The protein is Large ribosomal subunit protein uL24 of Lactococcus lactis subsp. lactis (strain IL1403) (Streptococcus lactis).